A 445-amino-acid chain; its full sequence is Phosphoglucosamine mutase (445 aa).

Residue Ser102 is the Phosphoserine intermediate of the active site. Mg(2+)-binding residues include Ser102, Asp241, Asp243, and Asp245. Phosphoserine is present on Ser102.

The protein belongs to the phosphohexose mutase family. It depends on Mg(2+) as a cofactor. Activated by phosphorylation.

The catalysed reaction is alpha-D-glucosamine 1-phosphate = D-glucosamine 6-phosphate. Functionally, catalyzes the conversion of glucosamine-6-phosphate to glucosamine-1-phosphate. This Escherichia coli O81 (strain ED1a) protein is Phosphoglucosamine mutase.